Here is a 214-residue protein sequence, read N- to C-terminus: Transcriptional regulatory protein ComA (214 aa).

Residues 3 to 121 (KILVIDDHPA…KITQYIYHVL (119 aa)) form the Response regulatory domain. The residue at position 55 (aspartate 55) is a 4-aspartylphosphate. The HTH luxR-type domain maps to 147-212 (SQKEQDVLTP…EAVLIAKSDG (66 aa)). Residues 171-190 (NQEIADALHLSKRSIEYSLT) constitute a DNA-binding region (H-T-H motif).

In terms of processing, phosphorylated by ComP.

The protein resides in the cytoplasm. Its function is as follows. Response regulator in the two-component regulatory system ComP/ComA involved in a major quorum response pathway that regulates the development of genetic competence. Regulates directly the expression of over 20 genes, including genes of the srfA operon, degQ, rapA, rapC, rapE, rapF, etc. Regulates indirectly, through the regulation of comK transcription, the expression of late competence genes. In Bacillus subtilis (strain 168), this protein is Transcriptional regulatory protein ComA (comA).